We begin with the raw amino-acid sequence, 214 residues long: MPQATMIFPILFTFFLLLSSSNAAVQDFCVADLAAPEGPAGFSCKKPASVKVNDFVFSGLGIAGNTSNIIKAAVTPAFVAQFPGVNGLGISIARLDLAVGGVVPFHTHPGASEVLIVAQGTICAGFVASDNTPYLQTLEKGDIMVFPQGLLHFQVNGGEAPALAFASFGSASPGLQILDFALFKNDLPTEVIAQTTFLDAAQIKKLKGVLGGTN.

Residues 1-23 (MPQATMIFPILFTFFLLLSSSNA) form the signal peptide. Cys-29 and Cys-44 are joined by a disulfide. The region spanning 58–204 (SGLGIAGNTS…TTFLDAAQIK (147 aa)) is the Cupin type-1 domain. The N-linked (GlcNAc...) asparagine glycan is linked to Asn-65. Positions 106, 108, 113, and 152 each coordinate Mn(2+).

It belongs to the germin family. In terms of assembly, interacts with ABP19.

The protein localises to the secreted. The protein resides in the extracellular space. It is found in the apoplast. Its subcellular location is the cell wall. Its function is as follows. Probable receptor for the plant growth-promoting hormone auxin. This is Auxin-binding protein ABP20 (ABP20) from Prunus persica (Peach).